A 261-amino-acid chain; its full sequence is 3-methyl-2-oxobutanoate hydroxymethyltransferase (261 aa).

Residues aspartate 42 and aspartate 81 each coordinate Mg(2+). Residues 42 to 43 (DS), aspartate 81, and lysine 110 contribute to the 3-methyl-2-oxobutanoate site. Glutamate 112 is a binding site for Mg(2+). Glutamate 179 (proton acceptor) is an active-site residue.

The protein belongs to the PanB family. Homodecamer; pentamer of dimers. Requires Mg(2+) as cofactor.

It is found in the cytoplasm. The enzyme catalyses 3-methyl-2-oxobutanoate + (6R)-5,10-methylene-5,6,7,8-tetrahydrofolate + H2O = 2-dehydropantoate + (6S)-5,6,7,8-tetrahydrofolate. The protein operates within cofactor biosynthesis; coenzyme A biosynthesis. In terms of biological role, catalyzes the reversible reaction in which hydroxymethyl group from 5,10-methylenetetrahydrofolate is transferred onto alpha-ketoisovalerate to form ketopantoate. The polypeptide is 3-methyl-2-oxobutanoate hydroxymethyltransferase (Pyrobaculum islandicum (strain DSM 4184 / JCM 9189 / GEO3)).